The sequence spans 57 residues: Metallothionein-2 (57 aa).

Residues 1–28 are beta; the sequence is PDPCCNDKCDCKEGECKTGCKCTSCRCP. The a divalent metal cation site is built by C4, C5, C9, C11, C16, C20, C22, C25, C27, C30, C33, C37, C39, C45, C49, C53, C55, and C56. Positions 29-57 are alpha; it reads PCEQCSSGCKCANKEDCRKTCSKPCSCCP.

The protein belongs to the metallothionein superfamily. Type 3 family.

Functionally, metallothioneins have a high content of cysteine residues that bind various heavy metals. Class I MTS in marine crustacea are involved in the sequestration of elevated levels of heavy-metal ions. The polypeptide is Metallothionein-2 (Scylla serrata (Mud crab)).